Consider the following 87-residue polypeptide: Small ribosomal subunit protein uS17 (87 aa).

It belongs to the universal ribosomal protein uS17 family. As to quaternary structure, part of the 30S ribosomal subunit.

Functionally, one of the primary rRNA binding proteins, it binds specifically to the 5'-end of 16S ribosomal RNA. This Geobacillus stearothermophilus (Bacillus stearothermophilus) protein is Small ribosomal subunit protein uS17.